The chain runs to 91 residues: Small ribosomal subunit protein bS16 (91 aa).

This sequence belongs to the bacterial ribosomal protein bS16 family.

The sequence is that of Small ribosomal subunit protein bS16 from Enterococcus faecalis (strain ATCC 700802 / V583).